The primary structure comprises 277 residues: Large ribosomal subunit protein uL2 (277 aa).

The disordered stretch occupies residues 223-277; the sequence is VVMNPIDHPHGGGEGRTSGGRHPVTPWGKPTKGKKTRSNKSTNKFILISRHKRKK.

It belongs to the universal ribosomal protein uL2 family. Part of the 50S ribosomal subunit. Forms a bridge to the 30S subunit in the 70S ribosome.

Functionally, one of the primary rRNA binding proteins. Required for association of the 30S and 50S subunits to form the 70S ribosome, for tRNA binding and peptide bond formation. It has been suggested to have peptidyltransferase activity; this is somewhat controversial. Makes several contacts with the 16S rRNA in the 70S ribosome. The chain is Large ribosomal subunit protein uL2 from Nitrobacter hamburgensis (strain DSM 10229 / NCIMB 13809 / X14).